The primary structure comprises 106 residues: 10 kDa heat shock protein, mitochondrial (106 aa).

An N-acetylserine modification is found at S2. A Phosphoserine modification is found at S31.

It belongs to the GroES chaperonin family. As to quaternary structure, homohexamer. Post-translationally, the N-terminus is blocked.

The protein resides in the mitochondrion matrix. Functionally, eukaryotic CPN10 homolog which is essential for mitochondrial protein biogenesis, together with CPN60. Binds to CPN60 in the presence of Mg-ATP and suppresses the ATPase activity of the latter. This is 10 kDa heat shock protein, mitochondrial (HSP10) from Saccharomyces cerevisiae (strain ATCC 204508 / S288c) (Baker's yeast).